The chain runs to 694 residues: Elongation factor G 2 (694 aa).

Positions 8–282 constitute a tr-type G domain; it reads TAIRNIGIMA…AVVSYLPSPL (275 aa). Residues 17–24, 81–85, and 135–138 each bind GTP; these read AHIDAGKT, DTPGH, and NKMD.

It belongs to the TRAFAC class translation factor GTPase superfamily. Classic translation factor GTPase family. EF-G/EF-2 subfamily.

It localises to the cytoplasm. Its function is as follows. Catalyzes the GTP-dependent ribosomal translocation step during translation elongation. During this step, the ribosome changes from the pre-translocational (PRE) to the post-translocational (POST) state as the newly formed A-site-bound peptidyl-tRNA and P-site-bound deacylated tRNA move to the P and E sites, respectively. Catalyzes the coordinated movement of the two tRNA molecules, the mRNA and conformational changes in the ribosome. This Syntrophomonas wolfei subsp. wolfei (strain DSM 2245B / Goettingen) protein is Elongation factor G 2.